An 861-amino-acid chain; its full sequence is Piwi-like protein 1 (861 aa).

Positions 1–13 (MTGRARARARGRA) are enriched in basic residues. Residues 1–64 (MTGRARARAR…TAGGTAKSQG (64 aa)) are disordered. R14 bears the Omega-N-methylarginine; by PRMT5; alternate mark. Residue R14 is modified to Symmetric dimethylarginine; by PRMT5; alternate. A compositionally biased stretch (polar residues) spans 17-27 (ETAQLVGSTAS). An Omega-N-methylarginine; by PRMT5 modification is found at R49. R53 carries the omega-N-methylarginine; alternate modification. R53 bears the Symmetric dimethylarginine; alternate mark. A D-box motif is present at residues 217 to 224 (RRLLKIMN). The region spanning 278-391 (TVLDFMFNFY…LIPELCYLTG (114 aa)) is the PAZ domain. Positions 316 to 318 (TYR) are required for binding 2'-O-methylated 3'-end of piRNAs. R370 is subject to Omega-N-methylarginine; by PRMT5. The interval 479-615 (SKETRGAPLI…LQMNCKMGGE (137 aa)) is MID region. Residues 555 to 847 (IVVCLLSSNR…LAFLVGQSIH (293 aa)) form the Piwi domain. Residues D632, E670, D702, and H836 contribute to the active site.

This sequence belongs to the argonaute family. Piwi subfamily. In terms of assembly, interacts (via Piwi domain) with DICER1, suggesting that it forms ribonucleoprotein RISC complexes; this interaction is regulated by HSP90AB1 activity. Interacts with MAEL, KIF17, PABPC1, PRMT5 and WDR77. Interacts (when methylated on arginine residues) with TDRD1, TDRKH/TDRD2, RNF17/TDRD4, TDRD6, TDRD7 and TDRD9. Interacts with CLOCK. Interacts with MOV10L1. Interacts with ANAPC10; interaction oly takes place following piRNA-binding. Interacts with RNF8; leading to sequester RNF8 in the cytoplasm. Interacts with TEX19. Mg(2+) serves as cofactor. Post-translationally, arginine methylation by PRMT5 is required for the interaction with Tudor domain-containing protein (TDRD1, TDRKH/TDRD2, RNF17/TDRD4, TDRD6, TDRD7 and TDRD9) and subsequent localization to the meiotic nuage, also named P granule. In terms of processing, ubiquitinated by the anaphase promoting complex/cyclosome (APC/C) in late spermatids, leading to its degradation. Ubiquitination only takes place following piRNA-binding in adult testis. Ubiquitination and degradation in late spermatogenesis by APC/C is probably required to release RNF8 from the cytoplasm and promote histone to protamine exchange by RNF8. As to expression, expressed in spermatocytes and spermatids. Also detected in prostate cancer (at protein level). Detected in most fetal and adult tissues. Expressed in testes, specifically in germline cells; detected in spermatocytes and spermatids during spermatogenesis. Increased expression in testicular tumors originating from embryonic germ cells with retention of germ cells phenotype. No expression in testicular tumors of somatic origin, such as Sertoli cell and Leydig cell tumors. Overexpressed in gastric cancer cells. Isoform 3: Ubiquitously expressed, and specifically in CD34(+) hematopoietic progenitor cells but not in more differentiated cells.

The protein resides in the cytoplasm. Endoribonuclease that plays a central role in postnatal germ cells by repressing transposable elements and preventing their mobilization, which is essential for the germline integrity. Acts via the piRNA metabolic process, which mediates the repression of transposable elements during meiosis by forming complexes composed of piRNAs and Piwi proteins and governs the methylation and subsequent repression of transposons. Directly binds methylated piRNAs, a class of 24 to 30 nucleotide RNAs that are generated by a Dicer-independent mechanism and are primarily derived from transposons and other repeated sequence elements. Strongly prefers a uridine in the first position of their guide (g1U preference, also named 1U-bias). Not involved in the piRNA amplification loop, also named ping-pong amplification cycle. Acts as an endoribonuclease that cleaves transposon messenger RNAs. Besides their function in transposable elements repression, piRNAs are probably involved in other processes during meiosis such as translation regulation. Probable component of some RISC complex, which mediates RNA cleavage and translational silencing. Also plays a role in the formation of chromatoid bodies and is required for some miRNAs stability. Required to sequester RNF8 in the cytoplasm until late spermatogenesis; RNF8 being released upon ubiquitination and degradation of PIWIL1. Functionally, may be a negative developmental regulator. This is Piwi-like protein 1 (PIWIL1) from Homo sapiens (Human).